We begin with the raw amino-acid sequence, 177 residues long: Protein C (177 aa).

A compositionally biased stretch (polar residues) spans 1–10 (MSTKAWNASR). The interval 1–37 (MSTKAWNASRLSGPDPSTPWSLKKPLQHGSRPPKGKR) is disordered.

Belongs to the morbillivirus protein C family.

The polypeptide is Protein C (P/V/C) (Bos indicus (Zebu)).